The following is a 122-amino-acid chain: MIQQESRLKVADNTGAKEILCIRVLGGSSRRYAGIGDIIVATVKDAIPGGNVKRGDVVKAVVVRTVKERRRPDGSYIKFDENAAVIIKPDNDPRGTRIFGPVGRELREKRFMKLISLAPEVL.

Belongs to the universal ribosomal protein uL14 family. As to quaternary structure, part of the 50S ribosomal subunit. Forms a cluster with proteins L3 and L19. In the 70S ribosome, L14 and L19 interact and together make contacts with the 16S rRNA in bridges B5 and B8.

Binds to 23S rRNA. Forms part of two intersubunit bridges in the 70S ribosome. The polypeptide is Large ribosomal subunit protein uL14 (Mycobacterium ulcerans (strain Agy99)).